The sequence spans 245 residues: 4-hydroxy-tetrahydrodipicolinate reductase (245 aa).

Residues 7-12 (GARGKV), 75-77 (GTT), and 102-105 (APNF) each bind NAD(+). Residue H132 is the Proton donor/acceptor of the active site. H133 is a (S)-2,3,4,5-tetrahydrodipicolinate binding site. Catalysis depends on K136, which acts as the Proton donor. Position 142–143 (142–143 (GT)) interacts with (S)-2,3,4,5-tetrahydrodipicolinate.

Belongs to the DapB family.

Its subcellular location is the cytoplasm. It carries out the reaction (S)-2,3,4,5-tetrahydrodipicolinate + NAD(+) + H2O = (2S,4S)-4-hydroxy-2,3,4,5-tetrahydrodipicolinate + NADH + H(+). It catalyses the reaction (S)-2,3,4,5-tetrahydrodipicolinate + NADP(+) + H2O = (2S,4S)-4-hydroxy-2,3,4,5-tetrahydrodipicolinate + NADPH + H(+). Its pathway is amino-acid biosynthesis; L-lysine biosynthesis via DAP pathway; (S)-tetrahydrodipicolinate from L-aspartate: step 4/4. Its function is as follows. Catalyzes the conversion of 4-hydroxy-tetrahydrodipicolinate (HTPA) to tetrahydrodipicolinate. The protein is 4-hydroxy-tetrahydrodipicolinate reductase of Mycolicibacterium smegmatis (strain ATCC 700084 / mc(2)155) (Mycobacterium smegmatis).